The primary structure comprises 103 residues: Large ribosomal subunit protein uL23 (103 aa).

It belongs to the universal ribosomal protein uL23 family. Part of the 50S ribosomal subunit. Contacts protein L29, and trigger factor when it is bound to the ribosome.

Functionally, one of the early assembly proteins it binds 23S rRNA. One of the proteins that surrounds the polypeptide exit tunnel on the outside of the ribosome. Forms the main docking site for trigger factor binding to the ribosome. This chain is Large ribosomal subunit protein uL23, found in Chlorobium phaeovibrioides (strain DSM 265 / 1930) (Prosthecochloris vibrioformis (strain DSM 265)).